A 120-amino-acid chain; its full sequence is ATP-dependent Clp protease adapter protein ClpS (120 aa).

A disordered region spans residues 1–20; the sequence is MATKSPVNPKVPLVQEPDRD.

It belongs to the ClpS family. As to quaternary structure, binds to the N-terminal domain of the chaperone ClpA.

Its function is as follows. Involved in the modulation of the specificity of the ClpAP-mediated ATP-dependent protein degradation. The sequence is that of ATP-dependent Clp protease adapter protein ClpS from Albidiferax ferrireducens (strain ATCC BAA-621 / DSM 15236 / T118) (Rhodoferax ferrireducens).